Here is a 673-residue protein sequence, read N- to C-terminus: MAFNLTSKYEPTGDQPAAIKQLVEGVERNDPAQVLLGVTGSGKTFTMANVIQQTQKPTLVLSHNKTLAAQLYGEFKQFFPENLVEYFISYYDYYQPEAFMPTSGLYIEKDLAINQEIEKLRLSATSSLMSGRRDIIVVASVSCIYGIGNPEEFRKSIVVLHKGQQINRNKLLYSFVEILYNRTTRDFTRGTFRVTGDTVDVYPAYADIAYRIQMWGDEVESIQMIEPETGKRISEQKSLTLFPANLFVTGKDSLNNAIHHIQDDLMKQVQLFEMEKRYGEAKRIQERTEFDIEMMRELGYCSGIENYSRYFDGRMPGQRPFCLIDYFPDDFLLVVDESHVTIPQIRAMFGGDRARKTNLVEYGFRLPSAMDNRPLTFDEFESINTQAIYVSATPADYELQRSEGAVVEQIIRPTGLLDPQIFIKPTVNQIDDLLDEIQERIEMGDRILVTTLTKRMAEELTKFLDGVGVRTRYIHSEVKTLDRVEILRELRLGVFDVLVGVNLLREGLDLPEVSLVAIMDADKEGFLRNVRSLVQTIGRAARNSNGKVIMYADKITASMQQAIDETSRRRATQLAYNELHGITPITVNKSKDEIMGQTKVADSNKFNKQYIEPEGEPSLAADPVVAMLNKTELTKMIDRAKKDMDKAAKDLDFVEAARYRDEMFALQKIIDSK.

The Helicase ATP-binding domain occupies 24–182 (EGVERNDPAQ…YSFVEILYNR (159 aa)). Residue 37–44 (GVTGSGKT) participates in ATP binding. Positions 90-113 (YYDYYQPEAFMPTSGLYIEKDLAI) match the Beta-hairpin motif. In terms of domain architecture, Helicase C-terminal spans 429-591 (QIDDLLDEIQ…ITPITVNKSK (163 aa)). A UVR domain is found at 634–669 (TKMIDRAKKDMDKAAKDLDFVEAARYRDEMFALQKI).

This sequence belongs to the UvrB family. Forms a heterotetramer with UvrA during the search for lesions. Interacts with UvrC in an incision complex.

It localises to the cytoplasm. Its function is as follows. The UvrABC repair system catalyzes the recognition and processing of DNA lesions. A damage recognition complex composed of 2 UvrA and 2 UvrB subunits scans DNA for abnormalities. Upon binding of the UvrA(2)B(2) complex to a putative damaged site, the DNA wraps around one UvrB monomer. DNA wrap is dependent on ATP binding by UvrB and probably causes local melting of the DNA helix, facilitating insertion of UvrB beta-hairpin between the DNA strands. Then UvrB probes one DNA strand for the presence of a lesion. If a lesion is found the UvrA subunits dissociate and the UvrB-DNA preincision complex is formed. This complex is subsequently bound by UvrC and the second UvrB is released. If no lesion is found, the DNA wraps around the other UvrB subunit that will check the other stand for damage. The chain is UvrABC system protein B from Cytophaga hutchinsonii (strain ATCC 33406 / DSM 1761 / CIP 103989 / NBRC 15051 / NCIMB 9469 / D465).